We begin with the raw amino-acid sequence, 303 residues long: Probable cell division protein WhiA (303 aa).

A DNA-binding region (H-T-H motif) is located at residues 272-303 (SIQQVADALEFPITKSGVNHRLRKINKIADDL).

It belongs to the WhiA family.

Functionally, involved in cell division and chromosome segregation. The polypeptide is Probable cell division protein WhiA (Streptococcus pyogenes serotype M6 (strain ATCC BAA-946 / MGAS10394)).